Here is an 82-residue protein sequence, read N- to C-terminus: Immediate early response 3-interacting protein 1 (82 aa).

Helical transmembrane passes span 2-22 (AFTL…VAVL) and 62-82 (VMRV…LLFG).

It belongs to the YOS1 family.

Its subcellular location is the endoplasmic reticulum membrane. Its function is as follows. Regulator of endoplasmic reticulum secretion that acts as a key determinant of brain size. Required for secretion of extracellular matrix proteins. Required for correct brain development by depositing sufficient extracellular matrix proteins for tissue integrity and the proliferation of neural progenitors. Acts as a regulator of the unfolded protein response (UPR). In Xenopus laevis (African clawed frog), this protein is Immediate early response 3-interacting protein 1.